A 226-amino-acid chain; its full sequence is 7-cyano-7-deazaguanine synthase (226 aa).

Isoleucine 7–threonine 17 contacts ATP. Zn(2+) is bound by residues cysteine 187, cysteine 195, cysteine 198, and cysteine 201.

It belongs to the QueC family. Requires Zn(2+) as cofactor.

The catalysed reaction is 7-carboxy-7-deazaguanine + NH4(+) + ATP = 7-cyano-7-deazaguanine + ADP + phosphate + H2O + H(+). It participates in purine metabolism; 7-cyano-7-deazaguanine biosynthesis. Catalyzes the ATP-dependent conversion of 7-carboxy-7-deazaguanine (CDG) to 7-cyano-7-deazaguanine (preQ(0)). This chain is 7-cyano-7-deazaguanine synthase, found in Chlorobium limicola (strain DSM 245 / NBRC 103803 / 6330).